The chain runs to 400 residues: Snake venom metalloproteinase H1 (400 aa).

The N-terminal stretch at 1–6 is a signal peptide; it reads FPYQGS. Residues 7–176 constitute a propeptide that is removed on maturation; sequence SIILESGNVN…KKASQLIVST (170 aa). The Peptidase M12B domain maps to 180–377; that stretch reads RYMEIVIVVD…ENPPCILNKP (198 aa). Ca(2+) contacts are provided by Glu183 and Asp267. 3 disulfides stabilise this stretch: Cys291–Cys372, Cys331–Cys356, and Cys333–Cys339. A Zn(2+)-binding site is contributed by His316. Residue Glu317 is part of the active site. 2 residues coordinate Zn(2+): His320 and His326. Positions 372, 375, 387, 390, 392, 394, and 400 each coordinate Ca(2+). The propeptide occupies 378-400; that stretch reads LRTDTVSTPVSGNELLEAGKDYD.

Belongs to the venom metalloproteinase (M12B) family. P-I subfamily. In terms of assembly, monomer. Zn(2+) is required as a cofactor. In terms of tissue distribution, expressed by the venom gland.

Its subcellular location is the secreted. Snake venom metalloproteinase that impairs hemostasis in the envenomed animal. This Deinagkistrodon acutus (Hundred-pace snake) protein is Snake venom metalloproteinase H1.